The chain runs to 213 residues: Large ribosomal subunit protein uL1 (213 aa).

It belongs to the universal ribosomal protein uL1 family. Part of the 50S ribosomal subunit.

Functionally, probably involved in E site tRNA release. Binds directly to 23S rRNA. Its function is as follows. Protein L1 is also a translational repressor protein, it controls the translation of its operon by binding to its mRNA. The protein is Large ribosomal subunit protein uL1 of Methanothermococcus thermolithotrophicus (Methanococcus thermolithotrophicus).